Here is a 383-residue protein sequence, read N- to C-terminus: Probable tRNA sulfurtransferase (383 aa).

Residues 58–158 (NEIIHILKMI…ENKSYVWFDK (101 aa)) form the THUMP domain. ATP contacts are provided by residues 176–177 (LL), 201–202 (TF), R259, G281, and Q290.

The protein belongs to the ThiI family.

It is found in the cytoplasm. It carries out the reaction [ThiI sulfur-carrier protein]-S-sulfanyl-L-cysteine + a uridine in tRNA + 2 reduced [2Fe-2S]-[ferredoxin] + ATP + H(+) = [ThiI sulfur-carrier protein]-L-cysteine + a 4-thiouridine in tRNA + 2 oxidized [2Fe-2S]-[ferredoxin] + AMP + diphosphate. It catalyses the reaction [ThiS sulfur-carrier protein]-C-terminal Gly-Gly-AMP + S-sulfanyl-L-cysteinyl-[cysteine desulfurase] + AH2 = [ThiS sulfur-carrier protein]-C-terminal-Gly-aminoethanethioate + L-cysteinyl-[cysteine desulfurase] + A + AMP + 2 H(+). It functions in the pathway cofactor biosynthesis; thiamine diphosphate biosynthesis. Catalyzes the ATP-dependent transfer of a sulfur to tRNA to produce 4-thiouridine in position 8 of tRNAs, which functions as a near-UV photosensor. Also catalyzes the transfer of sulfur to the sulfur carrier protein ThiS, forming ThiS-thiocarboxylate. This is a step in the synthesis of thiazole, in the thiamine biosynthesis pathway. The sulfur is donated as persulfide by IscS. The protein is Probable tRNA sulfurtransferase of Malacoplasma penetrans (strain HF-2) (Mycoplasma penetrans).